The following is a 214-amino-acid chain: uncharacterized protein (214 aa).

The next 2 helical transmembrane spans lie at 23 to 43 and 65 to 85; these read ILVGACAAVWLVFTGVSVAAA and VLYAVIVVSALVIVGAIPVLL. The segment at 96-115 is disordered; the sequence is ATRPTGASVRGGRSIGSGHP. The next 2 helical transmembrane spans lie at 152–172 and 181–201; these read VVLTSAIGIALIAVAAATYLM and WISYGLAGVVTAGMPVIEWLY.

It localises to the cell membrane. This is an uncharacterized protein from Mycobacterium tuberculosis (strain CDC 1551 / Oshkosh).